The following is an 84-amino-acid chain: Large ribosomal subunit protein bL27 (84 aa).

Residues 1–24 (MAHKKGGGSSKNGRDSNSQRLGVK) are disordered.

Belongs to the bacterial ribosomal protein bL27 family.

The sequence is that of Large ribosomal subunit protein bL27 from Leptospira borgpetersenii serovar Hardjo-bovis (strain JB197).